The following is a 343-amino-acid chain: Anthranilate phosphoribosyltransferase (343 aa).

5-phospho-alpha-D-ribose 1-diphosphate is bound by residues G84, 87–88 (GD), T92, 94–97 (NIST), 112–120 (KHGNRGVSS), and S124. G84 provides a ligand contact to anthranilate. Mg(2+) is bound at residue S96. N115 lines the anthranilate pocket. R170 lines the anthranilate pocket. Mg(2+) is bound by residues D229 and E230.

This sequence belongs to the anthranilate phosphoribosyltransferase family. In terms of assembly, homodimer. Requires Mg(2+) as cofactor.

The enzyme catalyses N-(5-phospho-beta-D-ribosyl)anthranilate + diphosphate = 5-phospho-alpha-D-ribose 1-diphosphate + anthranilate. The protein operates within amino-acid biosynthesis; L-tryptophan biosynthesis; L-tryptophan from chorismate: step 2/5. Functionally, catalyzes the transfer of the phosphoribosyl group of 5-phosphorylribose-1-pyrophosphate (PRPP) to anthranilate to yield N-(5'-phosphoribosyl)-anthranilate (PRA). This is Anthranilate phosphoribosyltransferase from Burkholderia orbicola (strain MC0-3).